Reading from the N-terminus, the 170-residue chain is Chorion protein S18 (170 aa).

An N-terminal signal peptide occupies residues 1-17; the sequence is MMKFMCIFVCAIAAVSA. Residues 146-159 are compositionally biased toward low complexity; it reads AAAASSSVAGQHSG. The interval 146 to 170 is disordered; sequence AAAASSSVAGQHSGYKNSGYKNSSY. Over residues 160-170 the composition is skewed to polar residues; sequence YKNSGYKNSSY.

It belongs to the chorion protein S15/S18 family.

Its subcellular location is the secreted. Its function is as follows. Chorion membrane (egg shell) protein; plays a role in protecting the egg from the environment. The chain is Chorion protein S18 (Cp18) from Drosophila virilis (Fruit fly).